We begin with the raw amino-acid sequence, 96 residues long: Nucleoid-associated protein TC_0612 (96 aa).

The protein belongs to the YbaB/EbfC family. As to quaternary structure, homodimer.

Its subcellular location is the cytoplasm. It localises to the nucleoid. In terms of biological role, binds to DNA and alters its conformation. May be involved in regulation of gene expression, nucleoid organization and DNA protection. This is Nucleoid-associated protein TC_0612 from Chlamydia muridarum (strain MoPn / Nigg).